We begin with the raw amino-acid sequence, 663 residues long: Subtilisin-like serine protease (663 aa).

An N-terminal signal peptide occupies residues 1-23 (MKKFGAVVLALFLVGLMAGSVLA). Residues 24 to 136 (APQKPAVRNV…IQEDYVVKVA (113 aa)) constitute a propeptide, removed in mature form. In terms of domain architecture, Peptidase S8 spans 139–439 (TEGLDESAAQ…AGRVNAYKAA (301 aa)). Active-site charge relay system residues include Asp-170, His-203, and Ser-382. Pro-420, Ile-423, Asp-483, Leu-484, Asp-485, Asp-497, Tyr-498, Thr-501, and Glu-507 together coordinate Ca(2+). The tract at residues 537-565 (VSDGSLGQPSGGGSEPSPSPSPEPTVDEK) is disordered. Residues 563 to 663 (DEKTFTGTVH…YQLDAKVYYG (101 aa)) constitute a propeptide, removed in mature form.

The protein belongs to the peptidase S8 family. Monomer.

It carries out the reaction Hydrolysis of proteins with broad specificity for peptide bonds, and a preference for a large uncharged residue in P1. Hydrolyzes peptide amides.. Its activity is regulated as follows. Resistant to treatment with 5% SDS, 8 M urea, 10% Triton X-100 or 10% Tween-20. Fully active although less stable in the presence of 10 mM EDTA. Activity not affected by the absence or presence of 10 mM CaCl(2). Unstable in the presence of 2 M or over GdnHCl and loses 35% and 99% of its activity upon incubation with 2 and 4 M GdnHCl, respectively, for 1 hour at 55 degrees Celsius. Nearly fully loses activity upon incubation at pH 2.0. Its function is as follows. Serine protease with a broad substrate specificity. The polypeptide is Subtilisin-like serine protease (Thermococcus kodakarensis (strain ATCC BAA-918 / JCM 12380 / KOD1) (Pyrococcus kodakaraensis (strain KOD1))).